The chain runs to 632 residues: Probable potassium transport system protein Kup (632 aa).

Transmembrane regions (helical) follow at residues leucine 20–leucine 40, isoleucine 60–isoleucine 80, leucine 111–proline 131, phenylalanine 146–leucine 166, leucine 178–isoleucine 198, phenylalanine 216–threonine 236, tryptophan 257–leucine 277, leucine 289–isoleucine 309, isoleucine 347–phenylalanine 367, valine 379–leucine 399, proline 404–alanine 424, and isoleucine 429–threonine 449.

The protein belongs to the HAK/KUP transporter (TC 2.A.72) family.

It localises to the cell inner membrane. The enzyme catalyses K(+)(in) + H(+)(in) = K(+)(out) + H(+)(out). In terms of biological role, transport of potassium into the cell. Likely operates as a K(+):H(+) symporter. In Pseudomonas putida (strain W619), this protein is Probable potassium transport system protein Kup.